The chain runs to 1392 residues: Leucine-rich PPR motif-containing protein, mitochondrial (1392 aa).

Residues 1–77 (MSALLRPARW…LPEEPAPVRR (77 aa)) constitute a mitochondrion transit peptide. PPR repeat units lie at residues 125–159 (LLRS…GTVY), 160–194 (DVSH…NIQP), 195–229 (NRVT…DLPI), 230–264 (TEAV…GIEP), 265–299 (GPDT…DHYF), 300–334 (MDRD…RRSI), 402–436 (HSSS…GFPI), 437–471 (RTHY…GVDP), 677–708 (VGDP…ESDM), 709–745 (VIGG…SAVL), 746–783 (DTAK…IKDA), 784–820 (AVLS…AKPS), 821–856 (SNIS…VLPR), and 953–987 (RDQM…NLIP). Lysine 151 and lysine 186 each carry N6-acetyllysine. Position 291 is an N6-acetyllysine (lysine 291). Residue lysine 462 is modified to N6-acetyllysine. An N6-acetyllysine modification is found at lysine 749. A phosphoserine mark is found at serine 1025, serine 1026, and serine 1028. PPR repeat units lie at residues 1030–1064 (GDTV…DVVF), 1065–1101 (SSEA…GFTL), 1102–1136 (NGAA…EQVP), 1137–1173 (SELA…IELS), 1174–1208 (RMVF…ENQT), and 1315–1349 (NDRV…NMKL). Residue serine 1137 is modified to Phosphoserine.

As to quaternary structure, component of mRNP complexes associated with HNRPA1. Component of the complex, at least composed of LRPPRC, BECN1 and BCL2; the interactions prevent BECN1 from forming an autophagy-inducing complex with PIK3C3. Interacts with CECR2, HEBP2, MAP1S, UXT, PPARGC1A and FOXO1. Interacts (via N-terminus) with EIF4E; the interaction promotes association of EIF4E with 4ESE-containing mRNAs. Interacts with exportin XPO1/CRM1; interacts both alone and in complex with EIF4E and 4ESE-containing mRNAs to form an EIF4E-dependent mRNA export complex. Interacts with importin IPO8; the interaction occurs when LRPPRC is in its RNA-free form and returns LRPPRC to the nucleus for further export rounds. Interacts with BECN1. Widely expressed. Expressed in liver, brain and a subset of small diameter sensory neurons in the dorsal root ganglion (at protein level).

Its subcellular location is the mitochondrion. It is found in the nucleus. It localises to the nucleoplasm. The protein localises to the nucleus inner membrane. The protein resides in the nucleus outer membrane. Functionally, may play a role in RNA metabolism in both nuclei and mitochondria. In the nucleus binds to HNRPA1-associated poly(A) mRNAs and is part of nmRNP complexes at late stages of mRNA maturation which are possibly associated with nuclear mRNA export. Positively modulates nuclear export of mRNAs containing the EIF4E sensitivity element (4ESE) by binding simultaneously to both EIF4E and the 4ESE and acting as a platform for assembly for the RNA export complex. Also binds to exportin XPO1/CRM1 to engage the nuclear pore and traffic the bound mRNAs to the cytoplasm. May bind mature mRNA in the nucleus outer membrane. In mitochondria binds to poly(A) mRNA. Plays a role in translation or stability of mitochondrially encoded cytochrome c oxidase (COX) subunits. May be involved in transcription regulation. Cooperates with PPARGC1A to regulate certain mitochondrially encoded genes and gluconeogenic genes and may regulate docking of PPARGC1A to transcription factors. Seems to be involved in the transcription regulation of the multidrug-related genes MDR1 and MVP. Part of a nuclear factor that binds to the invMED1 element of MDR1 and MVP gene promoters. Binds single-stranded DNA. Required for maintaining mitochondrial potential. Suppresses the initiation of basal levels of autophagy and mitophagy by sustaining BCL2 levels. In Rattus norvegicus (Rat), this protein is Leucine-rich PPR motif-containing protein, mitochondrial (Lrpprc).